Here is a 475-residue protein sequence, read N- to C-terminus: Squamosa promoter-binding-like protein 12 (475 aa).

The segment at 49–73 is disordered; that stretch reads NHGSTNSSGGTFTSSSELANGSSKS. Positions 51 to 73 are enriched in low complexity; that stretch reads GSTNSSGGTFTSSSELANGSSKS. The segment at 177–254 adopts an SBP-type zinc-finger fold; that stretch reads SSYCQVEGCK…SDHNARRRKP (78 aa). The Zn(2+) site is built by Cys180, Cys185, Cys202, His205, Cys221, Cys224, His228, and Cys240. The Bipartite nuclear localization signal signature appears at 237-253; that stretch reads KKSCRRRLSDHNARRRK. The tract at residues 437-475 is disordered; the sequence is GGGGFWQDGDDPPPLDHASQAQAFMHPGNGSSSGYGHLH. Residues 465–475 show a composition bias toward polar residues; that stretch reads NGSSSGYGHLH.

In terms of tissue distribution, expressed in young panicles.

It localises to the nucleus. Trans-acting factor that binds specifically to the consensus nucleotide sequence 5'-TNCGTACAA-3'. May be involved in panicle development. The protein is Squamosa promoter-binding-like protein 12 (SPL12) of Oryza sativa subsp. japonica (Rice).